The primary structure comprises 331 residues: L-lactate dehydrogenase A chain (331 aa).

Residues 29-57 (GMVG…MEDK) and Arg98 contribute to the NAD(+) site. The substrate site is built by Arg105, Asn137, and Arg168. Asn137 contributes to the NAD(+) binding site. The active-site Proton acceptor is the His192. Thr247 lines the substrate pocket.

This sequence belongs to the LDH/MDH superfamily. LDH family. As to quaternary structure, homotetramer.

The protein localises to the cytoplasm. It catalyses the reaction (S)-lactate + NAD(+) = pyruvate + NADH + H(+). It participates in fermentation; pyruvate fermentation to lactate; (S)-lactate from pyruvate: step 1/1. Its function is as follows. Interconverts simultaneously and stereospecifically pyruvate and lactate with concomitant interconversion of NADH and NAD(+). The polypeptide is L-lactate dehydrogenase A chain (ldha) (Patagonotothen tessellata (Black southern cod)).